Here is a 522-residue protein sequence, read N- to C-terminus: Maturase K (522 aa).

Belongs to the intron maturase 2 family. MatK subfamily.

It is found in the plastid. The protein localises to the chloroplast. Usually encoded in the trnK tRNA gene intron. Probably assists in splicing its own and other chloroplast group II introns. In Gladiolus papilio (Goldblotch gladiolus), this protein is Maturase K.